The sequence spans 206 residues: Cytochrome c oxidase assembly protein CtaG (206 aa).

Topologically, residues 1–22 (MTEQPTNRNDVPRRGLGRDATV) are cytoplasmic. The helical; Signal-anchor for type II membrane protein transmembrane segment at 23–43 (ASICGLVVALMVGASYAAVPF) threads the bilayer. Topologically, residues 44–206 (YNWFCRATGF…GEPDSRKGAL (163 aa)) are periplasmic.

The protein belongs to the COX11/CtaG family.

Its subcellular location is the cell inner membrane. In terms of biological role, exerts its effect at some terminal stage of cytochrome c oxidase synthesis, probably by being involved in the insertion of the copper B into subunit I. This chain is Cytochrome c oxidase assembly protein CtaG, found in Rhodopseudomonas palustris (strain BisB18).